The primary structure comprises 441 residues: Damage-control phosphatase ARMT1 (441 aa).

A2 is subject to N-acetylalanine. K40 is modified (N6-acetyllysine). At S102 the chain carries Phosphoserine. Mn(2+) is bound by residues D253 and N254. 253 to 254 serves as a coordination point for substrate; the sequence is DN. Positions 258 and 291 each coordinate S-adenosyl-L-methionine. Residue D291 participates in Mn(2+) binding. Residues 367 to 371 and K404 contribute to the substrate site; that span reads DLNYR. Positions 401–404 match the Subfamily III RTxK motif motif; sequence RTLK.

It belongs to the damage-control phosphatase family. Sugar phosphate phosphatase III subfamily. Requires Mn(2+) as cofactor. Ni(2+) serves as cofactor. Post-translationally, automethylated.

It catalyses the reaction beta-D-fructose 1-phosphate + H2O = D-fructose + phosphate. It carries out the reaction beta-D-fructose 6-phosphate = dihydroxyacetone + D-glyceraldehyde 3-phosphate. The enzyme catalyses L-glutamyl-[protein] + S-adenosyl-L-methionine = [protein]-L-glutamate 5-O-methyl ester + S-adenosyl-L-homocysteine. Functionally, metal-dependent phosphatase that shows phosphatase activity against several substrates, including fructose-1-phosphate and fructose-6-phosphate. Its preference for fructose-1-phosphate, a strong glycating agent that causes DNA damage rather than a canonical yeast metabolite, suggests a damage-control function in hexose phosphate metabolism. Has also been shown to have O-methyltransferase activity that methylates glutamate residues of target proteins to form gamma-glutamyl methyl ester residues. Possibly methylates PCNA, suggesting it is involved in the DNA damage response. This Bos taurus (Bovine) protein is Damage-control phosphatase ARMT1.